We begin with the raw amino-acid sequence, 145 residues long: Large ribosomal subunit protein uL13 (145 aa).

It belongs to the universal ribosomal protein uL13 family. In terms of assembly, part of the 50S ribosomal subunit.

Functionally, this protein is one of the early assembly proteins of the 50S ribosomal subunit, although it is not seen to bind rRNA by itself. It is important during the early stages of 50S assembly. The sequence is that of Large ribosomal subunit protein uL13 from Haloquadratum walsbyi (strain DSM 16790 / HBSQ001).